The sequence spans 156 residues: Succinate dehydrogenase assembly factor 2-B, mitochondrial (156 aa).

The N-terminal 24 residues, 1 to 24 (MLRQFIVSTVGRRLQLPMMAQSRL), are a transit peptide targeting the mitochondrion.

The protein belongs to the SDHAF2 family. In terms of assembly, interacts with the flavoprotein subunit within the SDH catalytic dimer.

It is found in the mitochondrion matrix. In terms of biological role, plays an essential role in the assembly of succinate dehydrogenase (SDH), an enzyme complex (also referred to as respiratory complex II) that is a component of both the tricarboxylic acid (TCA) cycle and the mitochondrial electron transport chain, and which couples the oxidation of succinate to fumarate with the reduction of ubiquinone (coenzyme Q) to ubiquinol. Required for flavinylation (covalent attachment of FAD) of the flavoprotein subunit of the SDH catalytic dimer. This chain is Succinate dehydrogenase assembly factor 2-B, mitochondrial, found in Drosophila simulans (Fruit fly).